Reading from the N-terminus, the 120-residue chain is Large ribosomal subunit protein uL18 (120 aa).

The protein belongs to the universal ribosomal protein uL18 family. In terms of assembly, part of the 50S ribosomal subunit; part of the 5S rRNA/L5/L18/L25 subcomplex. Contacts the 5S and 23S rRNAs.

Functionally, this is one of the proteins that bind and probably mediate the attachment of the 5S RNA into the large ribosomal subunit, where it forms part of the central protuberance. The chain is Large ribosomal subunit protein uL18 from Bartonella henselae (strain ATCC 49882 / DSM 28221 / CCUG 30454 / Houston 1) (Rochalimaea henselae).